The chain runs to 139 residues: Nucleoside diphosphate kinase (139 aa).

ATP-binding residues include Lys-10, Phe-58, Arg-86, Thr-92, Arg-104, and Asn-114. His-117 functions as the Pros-phosphohistidine intermediate in the catalytic mechanism.

The protein belongs to the NDK family. As to quaternary structure, homotetramer. Mg(2+) serves as cofactor.

The protein localises to the cytoplasm. The enzyme catalyses a 2'-deoxyribonucleoside 5'-diphosphate + ATP = a 2'-deoxyribonucleoside 5'-triphosphate + ADP. It carries out the reaction a ribonucleoside 5'-diphosphate + ATP = a ribonucleoside 5'-triphosphate + ADP. Its function is as follows. Major role in the synthesis of nucleoside triphosphates other than ATP. The ATP gamma phosphate is transferred to the NDP beta phosphate via a ping-pong mechanism, using a phosphorylated active-site intermediate. This Rhodococcus jostii (strain RHA1) protein is Nucleoside diphosphate kinase.